A 647-amino-acid chain; its full sequence is DNA mismatch repair protein MutL (647 aa).

This sequence belongs to the DNA mismatch repair MutL/HexB family.

In terms of biological role, this protein is involved in the repair of mismatches in DNA. It is required for dam-dependent methyl-directed DNA mismatch repair. May act as a 'molecular matchmaker', a protein that promotes the formation of a stable complex between two or more DNA-binding proteins in an ATP-dependent manner without itself being part of a final effector complex. This Bacillus cereus (strain G9842) protein is DNA mismatch repair protein MutL.